The chain runs to 295 residues: MPVNSPAPWQTIAQQISQTTGQPFRIQERRSVSGGCINQGYCLVDGEQKYFVKLNQAQQWQMFQAEALGLEAMAATQTIRVPRPICHGSSAGHSYLVLEWLEFGRGNHDSWYRMGQNLAALHQAGGSAQFGWQTDNTIGATPQPNPWTDSWADFFAEHRLGYQLALARRRAGNFPDPAVVVPKVKQLLGDRQPTPALVHGDLWSGNGAILTTGEPVILDPATYYGDGEVDLAMTELFGGFPAAFYQGYHSISPAEPGYQQRKILYNLYHILNHFNLFGGGYQQQAQQMLKQCLRI.

99–101 (EWL) contacts ATP. Catalysis depends on aspartate 201, which acts as the Proton acceptor.

It belongs to the fructosamine kinase family.

Functionally, ketoamine kinase that phosphorylates ketoamines on the third carbon of the sugar moiety to generate ketoamine 3-phosphate. The chain is Probable ketoamine kinase slr1563 from Synechocystis sp. (strain ATCC 27184 / PCC 6803 / Kazusa).